Consider the following 367-residue polypeptide: Embryonic developmental protein tofu-6 (367 aa).

The RRM domain occupies 13-92; that stretch reads AGFHIRNIPK…FTLKVTDHKN (80 aa). The tract at residues 298–345 is required for ife-3 interaction; it reads KSILADRLQRKGVCEYLPRSQQPHYAYSRETLLQHNNSGVTAQISNDA.

In terms of assembly, component of the pid-1 variant of the PETISCO complex (also called the pid-3, erh-2, tofu-6, and ife-3 small RNA complex) containing at least pid-1, tofu-6, ife-3, pid-3, and erh-2, which is required for the biogenesis of 21 nucleotide PIWI-interacting RNAs (piRNAs) that possess a uracil residue at the 5'-end (also called 21U-RNAs). Within the pid-1 variant of the PETISCO complex interacts with pid-1. Component of the tost-1 variant of the PETISCO complex (also called the pid-3, erh-2, tofu-6, and ife-3 small RNA complex) containing at least tost-1, tofu-6, ife-3, pid-3, and erh-2, which plays an essential role in embryogenesis. Within the tost-1 variant of the PETISCO complex interacts with tost-1. Within the pid-1 and tost-1 variants of the PETISCO complexes interacts (via C-terminus) with ife-3. Within the pid-1 and tost-1 variants of the PETISCO complexes interacts (via the RRM domain) with pid-3. Within the pid-1 and tost-1 variants of the PETISCO complexes interacts (via the RRM domain) with erh-2. In contrast to the pid-1 variant of the PETISCO complex, the tost-1 variant of the PETISCO complex plays a minor role in the biogenesis of 21U-RNAs. Interacts (via residues 120-314) with the PUCH complex subunit tofu-1 (via residues 82-172); the interaction between the PETISCO and PUCH complex members enhances piRNA production in vivo. In terms of tissue distribution, expression is restricted to the germline (at protein level).

The protein resides in the cytoplasm. Its subcellular location is the perinuclear region. It is found in the nucleus. Component of the pid-1 and tost-1 variants of the PETISCO complexes, which have roles in the biogenesis of a class of 21 nucleotide PIWI-interacting RNAs (piRNAs) that possess a uracil residue at the 5'-end (also called 21U-RNAs) and embryogenesis, respectively. Promotes the biogenesis of 21U-RNAs. Mediates the interaction between the PETISCO complex and the PUCH complex, the endoribonuclease complex processing the 5'-end of precursor piRNAs, thereby enhancing mature piRNA production. Required for chromosome segregation and cell division in early embryos. May have a role in DNA replication. This chain is Embryonic developmental protein tofu-6, found in Caenorhabditis elegans.